We begin with the raw amino-acid sequence, 227 residues long: 2,3-bisphosphoglycerate-dependent phosphoglycerate mutase (227 aa).

Substrate-binding positions include 7–14, 20–21, arginine 59, 86–89, lysine 97, 113–114, and 182–183; these read RHGFSEWN, TG, ERHY, RR, and GN. The active-site Tele-phosphohistidine intermediate is histidine 8. The active-site Proton donor/acceptor is the glutamate 86.

Belongs to the phosphoglycerate mutase family. BPG-dependent PGAM subfamily. In terms of assembly, homodimer.

The enzyme catalyses (2R)-2-phosphoglycerate = (2R)-3-phosphoglycerate. The protein operates within carbohydrate degradation; glycolysis; pyruvate from D-glyceraldehyde 3-phosphate: step 3/5. Its function is as follows. Catalyzes the interconversion of 2-phosphoglycerate and 3-phosphoglycerate. This Histophilus somni (strain 129Pt) (Haemophilus somnus) protein is 2,3-bisphosphoglycerate-dependent phosphoglycerate mutase.